We begin with the raw amino-acid sequence, 537 residues long: Glucose-6-phosphate isomerase (537 aa).

The active-site Proton donor is Glu355. Catalysis depends on residues His386 and Lys501.

The protein belongs to the GPI family.

It localises to the cytoplasm. It carries out the reaction alpha-D-glucose 6-phosphate = beta-D-fructose 6-phosphate. The protein operates within carbohydrate biosynthesis; gluconeogenesis. It functions in the pathway carbohydrate degradation; glycolysis; D-glyceraldehyde 3-phosphate and glycerone phosphate from D-glucose: step 2/4. In terms of biological role, catalyzes the reversible isomerization of glucose-6-phosphate to fructose-6-phosphate. The polypeptide is Glucose-6-phosphate isomerase (Protochlamydia amoebophila (strain UWE25)).